The following is a 260-amino-acid chain: MAKPKIGLALGSGGARGLAHLGVLSSLHKHQIEVDMIAGSSMGALVGSFYAAGHDVATMKKVAKAFKRRLYADYTVPKLGFLKGDRVRQLVHAYTFGKPIEELQIPLGIVACDLQTGEKIVFRKGSVSDAVRASISIPGIFIPQRLDGRLLVDGAVVDRIPVSVVKDMGADIIIASDVSRVRKTETAVHIFDVIMQSMDILQNELVRHQTIAADIMIRPSLETYSSSSFANIEEMISAGEEATNRMISKIRKEIENWEGS.

In terms of domain architecture, PNPLA spans 8 to 166; sequence LALGSGGARG…VDRIPVSVVK (159 aa). The GXSXG motif lies at 39–43; the sequence is GSSMG. Serine 41 serves as the catalytic Nucleophile. Aspartate 153 (proton acceptor) is an active-site residue. The DGA/G motif lies at 153-155; sequence DGA.

This sequence belongs to the NTE family.

This is an uncharacterized protein from Bacillus subtilis (strain 168).